A 484-amino-acid chain; its full sequence is Protein LAZ1 homolog 1 (484 aa).

The signal sequence occupies residues 1 to 19 (MEWRGILCSLLFIVSVGES). 6 helical membrane-spanning segments follow: residues 42-62 (PILS…YLIF), 76-96 (FLIG…LSLV), 190-210 (MILK…GVYG), 219-239 (GYPY…YCLV), 264-284 (IVFL…MGLV), and 299-319 (YIIC…FPAA). Residues 344–364 (PDPEEVKDSERTTRTRYGRHD) are disordered. Basic and acidic residues predominate over residues 347–364 (EEVKDSERTTRTRYGRHD). A coiled-coil region spans residues 406-428 (IAKINRTFHQISENVKRFEQQKK). Positions 459-484 (VSDSGLGSTNRHHQSRVSGLWTRMRR) are disordered.

This sequence belongs to the TMEM184 family.

Its subcellular location is the membrane. In Arabidopsis thaliana (Mouse-ear cress), this protein is Protein LAZ1 homolog 1.